Here is a 455-residue protein sequence, read N- to C-terminus: Bifunctional protein GlmU (455 aa).

Residues 1–230 (MVNKNAIILA…FDESMGVNDR (230 aa)) form a pyrophosphorylase region. UDP-N-acetyl-alpha-D-glucosamine is bound by residues 9–12 (LAAG), K23, Q73, 78–79 (GT), 101–103 (SGD), G140, E155, N170, and N228. Position 103 (D103) interacts with Mg(2+). A Mg(2+)-binding site is contributed by N228. The interval 231-251 (SALAKATKIMQKRINTQLMKD) is linker. The segment at 252-455 (GVTLVDPETA…KPGYAKKLPW (204 aa)) is N-acetyltransferase. The UDP-N-acetyl-alpha-D-glucosamine site is built by R333 and K351. Residue H363 is the Proton acceptor of the active site. Y366 and N377 together coordinate UDP-N-acetyl-alpha-D-glucosamine. Acetyl-CoA contacts are provided by residues 386–387 (NY), S405, A423, and R440.

It in the N-terminal section; belongs to the N-acetylglucosamine-1-phosphate uridyltransferase family. In the C-terminal section; belongs to the transferase hexapeptide repeat family. In terms of assembly, homotrimer. Requires Mg(2+) as cofactor.

Its subcellular location is the cytoplasm. It carries out the reaction alpha-D-glucosamine 1-phosphate + acetyl-CoA = N-acetyl-alpha-D-glucosamine 1-phosphate + CoA + H(+). It catalyses the reaction N-acetyl-alpha-D-glucosamine 1-phosphate + UTP + H(+) = UDP-N-acetyl-alpha-D-glucosamine + diphosphate. The protein operates within nucleotide-sugar biosynthesis; UDP-N-acetyl-alpha-D-glucosamine biosynthesis; N-acetyl-alpha-D-glucosamine 1-phosphate from alpha-D-glucosamine 6-phosphate (route II): step 2/2. It participates in nucleotide-sugar biosynthesis; UDP-N-acetyl-alpha-D-glucosamine biosynthesis; UDP-N-acetyl-alpha-D-glucosamine from N-acetyl-alpha-D-glucosamine 1-phosphate: step 1/1. It functions in the pathway bacterial outer membrane biogenesis; LPS lipid A biosynthesis. Catalyzes the last two sequential reactions in the de novo biosynthetic pathway for UDP-N-acetylglucosamine (UDP-GlcNAc). The C-terminal domain catalyzes the transfer of acetyl group from acetyl coenzyme A to glucosamine-1-phosphate (GlcN-1-P) to produce N-acetylglucosamine-1-phosphate (GlcNAc-1-P), which is converted into UDP-GlcNAc by the transfer of uridine 5-monophosphate (from uridine 5-triphosphate), a reaction catalyzed by the N-terminal domain. The chain is Bifunctional protein GlmU from Limosilactobacillus fermentum (strain NBRC 3956 / LMG 18251) (Lactobacillus fermentum).